A 395-amino-acid chain; its full sequence is Major outer membrane porin, serovar F (395 aa).

A signal peptide spans 1–22; the sequence is MKKLLKSVLVFAALSSASSLQA.

This sequence belongs to the chlamydial porin (CP) (TC 1.B.2) family. Part of a disulfide cross-linked outer membrane complex (COMC) composed of the major outer membrane porin (MOMP), the small cysteine-rich protein (OmcA) and the large cysteine-rich periplasmic protein (OmcB).

Its subcellular location is the cell outer membrane. In terms of biological role, in elementary bodies (EBs, the infectious stage, which is able to survive outside the host cell) provides the structural integrity of the outer envelope through disulfide cross-links with the small cysteine-rich protein and the large cysteine-rich periplasmic protein. It has been described in publications as the Sarkosyl-insoluble COMC (Chlamydia outer membrane complex), and serves as the functional equivalent of peptidoglycan. Its function is as follows. Permits diffusion of specific solutes through the outer membrane. This is Major outer membrane porin, serovar F (ompA) from Chlamydia trachomatis.